The following is a 343-amino-acid chain: Heat-inducible transcription repressor HrcA (343 aa).

The protein belongs to the HrcA family.

In terms of biological role, negative regulator of class I heat shock genes (grpE-dnaK-dnaJ and groELS operons). Prevents heat-shock induction of these operons. This is Heat-inducible transcription repressor HrcA from Mycolicibacterium paratuberculosis (strain ATCC BAA-968 / K-10) (Mycobacterium paratuberculosis).